The chain runs to 164 residues: Anthrone oxygenase AgnL2 (164 aa).

A run of 3 helical transmembrane segments spans residues 11-31 (VVTGSFLSGAMISLSLMAVPV), 48-70 (RMYHYGHQVLPTMAVATTLLYAY), and 85-105 (VFALAGTITVSMIPFTWLCMV).

This sequence belongs to the anthrone oxygenase family.

It is found in the membrane. The catalysed reaction is emodin anthrone + O2 = emodin + H2O + H(+). It functions in the pathway secondary metabolite biosynthesis. Its function is as follows. Anthrone oxygenase; part of the gene cluster that mediates the biosynthesis of agnestins, dihydroxy-xanthone metabolites. The pathway begins with the assembly and cyclization of atrochrysone thioester by the non-reducing polyketide synthase Agnpks1. The atrochrysone carboxyl ACP thioesterase AgnL7 then breaks the thioester bond and releases the atrochrysone carboxylic acid as the first enzyme-free intermediate. The decarboxylase AgnL1 then catalyzes the concerted decarboxylation-elimination required to convert atochrysone carboxylic acid into emodin anthrone, which is further oxidized to emodin by the anthrone oxygenase AgnL2. Emodin then undergoes reduction catalyzed by the oxidoreductase AgnL4 to yield the dihydroquinone tautomer which is the substrate for reduction by the short chain dehydrogenase AgnL6 reduction to produce hydroxyketone, followed by AgnL8 dehydration and likely spontaneous autoxidation to chrysophanol. Baeyer-Villiger oxidation by the oxidase AgnL3 leads to monodictyphenone via cleavage of the C-10/C-10a bond of chrysophanol. Alternative cleavage at the C-4a/C-10 bond of chrysophanol also leads to the formation some cephalone F. Further conversion to agnestins A and B, requires reduction to dihydro-monodictyphenone, oxidation to agnestin C probably via an epoxide, and rearrangement to either agnestin A or agnestin B directly, although agnestin A or agnestin B can also interconvert. Within the cluster, AgnR1 is the only unassigned oxidoreductase present which could be involved in this conversion. However, AgnR1 seems not to be involved in this step, and thus genes involved in the proposed oxidation/reduction may be located elsewhere on the genome. Further agnestin A derivatives are probably formed by spontaneous decarboxylations, dehydrations and methanolysis reactions. The sequence is that of Anthrone oxygenase AgnL2 from Paecilomyces divaricatus (Penicillium divaricatum).